We begin with the raw amino-acid sequence, 112 residues long: Ribonuclease P protein component (112 aa).

This sequence belongs to the RnpA family. As to quaternary structure, consists of a catalytic RNA component (M1 or rnpB) and a protein subunit.

It carries out the reaction Endonucleolytic cleavage of RNA, removing 5'-extranucleotides from tRNA precursor.. In terms of biological role, RNaseP catalyzes the removal of the 5'-leader sequence from pre-tRNA to produce the mature 5'-terminus. It can also cleave other RNA substrates such as 4.5S RNA. The protein component plays an auxiliary but essential role in vivo by binding to the 5'-leader sequence and broadening the substrate specificity of the ribozyme. This is Ribonuclease P protein component from Mycoplasma mobile (strain ATCC 43663 / 163K / NCTC 11711) (Mesomycoplasma mobile).